Reading from the N-terminus, the 190-residue chain is Spermatogenesis-associated protein 12 (190 aa).

In terms of tissue distribution, expressed in testis.

The protein is Spermatogenesis-associated protein 12 (SPATA12) of Homo sapiens (Human).